We begin with the raw amino-acid sequence, 392 residues long: Queuine tRNA-ribosyltransferase (392 aa).

Residue Asp93 is the Proton acceptor of the active site. Residues 93-97 (DSGGY), Asp147, Gln189, and Gly216 each bind substrate. The tract at residues 247 to 253 (GVGAPED) is RNA binding. Asp266 acts as the Nucleophile in catalysis. The segment at 271–275 (TRVAR) is RNA binding; important for wobble base 34 recognition. Zn(2+) contacts are provided by Cys304, Cys306, Cys309, and His335.

This sequence belongs to the queuine tRNA-ribosyltransferase family. Homodimer. Within each dimer, one monomer is responsible for RNA recognition and catalysis, while the other monomer binds to the replacement base PreQ1. Requires Zn(2+) as cofactor.

The catalysed reaction is 7-aminomethyl-7-carbaguanine + guanosine(34) in tRNA = 7-aminomethyl-7-carbaguanosine(34) in tRNA + guanine. It participates in tRNA modification; tRNA-queuosine biosynthesis. Catalyzes the base-exchange of a guanine (G) residue with the queuine precursor 7-aminomethyl-7-deazaguanine (PreQ1) at position 34 (anticodon wobble position) in tRNAs with GU(N) anticodons (tRNA-Asp, -Asn, -His and -Tyr). Catalysis occurs through a double-displacement mechanism. The nucleophile active site attacks the C1' of nucleotide 34 to detach the guanine base from the RNA, forming a covalent enzyme-RNA intermediate. The proton acceptor active site deprotonates the incoming PreQ1, allowing a nucleophilic attack on the C1' of the ribose to form the product. After dissociation, two additional enzymatic reactions on the tRNA convert PreQ1 to queuine (Q), resulting in the hypermodified nucleoside queuosine (7-(((4,5-cis-dihydroxy-2-cyclopenten-1-yl)amino)methyl)-7-deazaguanosine). The chain is Queuine tRNA-ribosyltransferase from Dehalococcoides mccartyi (strain ATCC BAA-2266 / KCTC 15142 / 195) (Dehalococcoides ethenogenes (strain 195)).